A 71-amino-acid polypeptide reads, in one-letter code: Small ribosomal subunit protein bS21 (71 aa).

The segment at 38 to 71 (YEKPTTERKRARASAIKRHAKKLARENARRTRLY) is disordered. The segment covering 46-59 (KRARASAIKRHAKK) has biased composition (basic residues). Over residues 60 to 71 (LARENARRTRLY) the composition is skewed to basic and acidic residues.

It belongs to the bacterial ribosomal protein bS21 family.

In Hamiltonella defensa subsp. Acyrthosiphon pisum (strain 5AT), this protein is Small ribosomal subunit protein bS21.